The sequence spans 184 residues: NADH-quinone oxidoreductase subunit B 2 (184 aa).

[4Fe-4S] cluster is bound by residues Cys-59, Cys-60, Cys-125, and Cys-153.

The protein belongs to the complex I 20 kDa subunit family. As to quaternary structure, NDH-1 is composed of 14 different subunits. Subunits NuoB, C, D, E, F, and G constitute the peripheral sector of the complex. [4Fe-4S] cluster serves as cofactor.

It is found in the cell inner membrane. It carries out the reaction a quinone + NADH + 5 H(+)(in) = a quinol + NAD(+) + 4 H(+)(out). Functionally, NDH-1 shuttles electrons from NADH, via FMN and iron-sulfur (Fe-S) centers, to quinones in the respiratory chain. Couples the redox reaction to proton translocation (for every two electrons transferred, four hydrogen ions are translocated across the cytoplasmic membrane), and thus conserves the redox energy in a proton gradient. This Solibacter usitatus (strain Ellin6076) protein is NADH-quinone oxidoreductase subunit B 2.